We begin with the raw amino-acid sequence, 1875 residues long: Soluble starch synthase 3a, chloroplastic/amyloplastic (1875 aa).

Residues 1–49 constitute a chloroplast transit peptide; it reads MEMALRPQSLLCPRSRLKVVIRPASSASGGGLAQYFLMTRRYTGSRIVR. Positions 1007-1065 form a coiled coil; that stretch reads KRELERVATEEAERRRHAEEQQRMGEQRAAEQAAREQAKKEIELKKNKLQNLLSSARTH. The tract at residues 1014 to 1043 is disordered; sequence ATEEAERRRHAEEQQRMGEQRAAEQAAREQ.

This sequence belongs to the glycosyltransferase 1 family. Bacterial/plant glycogen synthase subfamily. As to expression, expressed in the endosperm.

It is found in the plastid. The protein localises to the chloroplast. It localises to the amyloplast. It catalyses the reaction [(1-&gt;4)-alpha-D-glucosyl](n) + ADP-alpha-D-glucose = [(1-&gt;4)-alpha-D-glucosyl](n+1) + ADP + H(+). The protein operates within glycan biosynthesis; starch biosynthesis. Functionally, involved in starch synthesis in endosperm amyloplasts. Plays an important role in the elongation of amylopectin B chains. In Oryza sativa subsp. japonica (Rice), this protein is Soluble starch synthase 3a, chloroplastic/amyloplastic.